Reading from the N-terminus, the 729-residue chain is Phosphoribosylformylglycinamidine synthase subunit PurL (729 aa).

Residue histidine 54 is part of the active site. The ATP site is built by tyrosine 57 and lysine 96. Glutamate 98 is a Mg(2+) binding site. Substrate contacts are provided by residues 99–102 (SHNH) and arginine 121. Residue histidine 100 is the Proton acceptor of the active site. Mg(2+) is bound at residue aspartate 122. Glutamine 245 is a binding site for substrate. Aspartate 273 is a binding site for Mg(2+). 317–319 (ETQ) contributes to the substrate binding site. Residues aspartate 495 and glycine 532 each coordinate ATP. A Mg(2+)-binding site is contributed by asparagine 533. Serine 535 is a binding site for substrate.

It belongs to the FGAMS family. Monomer. Part of the FGAM synthase complex composed of 1 PurL, 1 PurQ and 2 PurS subunits.

The protein resides in the cytoplasm. It carries out the reaction N(2)-formyl-N(1)-(5-phospho-beta-D-ribosyl)glycinamide + L-glutamine + ATP + H2O = 2-formamido-N(1)-(5-O-phospho-beta-D-ribosyl)acetamidine + L-glutamate + ADP + phosphate + H(+). The protein operates within purine metabolism; IMP biosynthesis via de novo pathway; 5-amino-1-(5-phospho-D-ribosyl)imidazole from N(2)-formyl-N(1)-(5-phospho-D-ribosyl)glycinamide: step 1/2. In terms of biological role, part of the phosphoribosylformylglycinamidine synthase complex involved in the purines biosynthetic pathway. Catalyzes the ATP-dependent conversion of formylglycinamide ribonucleotide (FGAR) and glutamine to yield formylglycinamidine ribonucleotide (FGAM) and glutamate. The FGAM synthase complex is composed of three subunits. PurQ produces an ammonia molecule by converting glutamine to glutamate. PurL transfers the ammonia molecule to FGAR to form FGAM in an ATP-dependent manner. PurS interacts with PurQ and PurL and is thought to assist in the transfer of the ammonia molecule from PurQ to PurL. The sequence is that of Phosphoribosylformylglycinamidine synthase subunit PurL from Staphylococcus aureus (strain USA300).